A 63-amino-acid chain; its full sequence is Large ribosomal subunit protein uL30 (63 aa).

Belongs to the universal ribosomal protein uL30 family. As to quaternary structure, part of the 50S ribosomal subunit.

In Xanthomonas axonopodis pv. citri (strain 306), this protein is Large ribosomal subunit protein uL30.